The primary structure comprises 267 residues: NAD kinase 1 (267 aa).

The active-site Proton acceptor is the aspartate 45. Residues 45 to 46 (DG), 122 to 123 (NE), arginine 149, aspartate 151, and alanine 186 contribute to the NAD(+) site.

This sequence belongs to the NAD kinase family. The cofactor is a divalent metal cation.

The protein localises to the cytoplasm. It carries out the reaction NAD(+) + ATP = ADP + NADP(+) + H(+). Involved in the regulation of the intracellular balance of NAD and NADP, and is a key enzyme in the biosynthesis of NADP. Catalyzes specifically the phosphorylation on 2'-hydroxyl of the adenosine moiety of NAD to yield NADP. In Oceanobacillus iheyensis (strain DSM 14371 / CIP 107618 / JCM 11309 / KCTC 3954 / HTE831), this protein is NAD kinase 1.